The chain runs to 33 residues: Dermaseptin-J7 (33 aa).

A Valine amide modification is found at Val33.

As to expression, expressed by the skin glands.

The protein localises to the secreted. Has antimicrobial activity. The sequence is that of Dermaseptin-J7 from Phasmahyla jandaia (Jandaia leaf frog).